The chain runs to 97 residues: Large ribosomal subunit protein uL23 (97 aa).

Belongs to the universal ribosomal protein uL23 family. In terms of assembly, part of the 50S ribosomal subunit. Contacts protein L29, and trigger factor when it is bound to the ribosome.

In terms of biological role, one of the early assembly proteins it binds 23S rRNA. One of the proteins that surrounds the polypeptide exit tunnel on the outside of the ribosome. Forms the main docking site for trigger factor binding to the ribosome. This chain is Large ribosomal subunit protein uL23, found in Pelagibacter ubique (strain HTCC1062).